The primary structure comprises 256 residues: Triosephosphate isomerase (256 aa).

9–11 (NWK) is a substrate binding site. His97 acts as the Electrophile in catalysis. The active-site Proton acceptor is Glu169. Substrate is bound by residues Gly175, Ser214, and 235 to 236 (GG).

Belongs to the triosephosphate isomerase family. As to quaternary structure, homodimer.

Its subcellular location is the cytoplasm. The enzyme catalyses D-glyceraldehyde 3-phosphate = dihydroxyacetone phosphate. It participates in carbohydrate biosynthesis; gluconeogenesis. The protein operates within carbohydrate degradation; glycolysis; D-glyceraldehyde 3-phosphate from glycerone phosphate: step 1/1. Its function is as follows. Involved in the gluconeogenesis. Catalyzes stereospecifically the conversion of dihydroxyacetone phosphate (DHAP) to D-glyceraldehyde-3-phosphate (G3P). The sequence is that of Triosephosphate isomerase from Aliivibrio salmonicida (strain LFI1238) (Vibrio salmonicida (strain LFI1238)).